The following is a 135-amino-acid chain: Small ribosomal subunit protein uS11 (135 aa).

The protein belongs to the universal ribosomal protein uS11 family. As to quaternary structure, part of the 30S ribosomal subunit. Interacts with proteins S7 and S18. Binds to IF-3.

Functionally, located on the platform of the 30S subunit, it bridges several disparate RNA helices of the 16S rRNA. Forms part of the Shine-Dalgarno cleft in the 70S ribosome. The polypeptide is Small ribosomal subunit protein uS11 (Corynebacterium urealyticum (strain ATCC 43042 / DSM 7109)).